Reading from the N-terminus, the 236-residue chain is ATP synthase subunit 4, mitochondrial (236 aa).

The transit peptide at 1-29 (MAFRALTTKAAARPLLALGPRSVAMGARY) directs the protein to the mitochondrion.

This sequence belongs to the eukaryotic ATPase subunit B family. F-type ATPases have 2 components, CF(1) - the catalytic core - and CF(0) - the membrane proton channel. In yeast, the dimeric form of ATP synthase consists of 17 polypeptides: alpha, beta, gamma, delta, epsilon, 4 (B), 5 (OSCP), 6 (A), 8, 9 (C), d, E (Tim11), f, g, h, i/j and k.

The protein resides in the mitochondrion. The protein localises to the mitochondrion inner membrane. Functionally, mitochondrial membrane ATP synthase (F(1)F(0) ATP synthase or Complex V) produces ATP from ADP in the presence of a proton gradient across the membrane which is generated by electron transport complexes of the respiratory chain. F-type ATPases consist of two structural domains, F(1) - containing the extramembraneous catalytic core, and F(0) - containing the membrane proton channel, linked together by a central stalk and a peripheral stalk. During catalysis, ATP synthesis in the catalytic domain of F(1) is coupled via a rotary mechanism of the central stalk subunits to proton translocation. Part of the complex F(0) domain and the peripheric stalk, which acts as a stator to hold the catalytic alpha(3)beta(3) subcomplex and subunit a/ATP6 static relative to the rotary elements. This chain is ATP synthase subunit 4, mitochondrial (ATP4), found in Eremothecium gossypii (strain ATCC 10895 / CBS 109.51 / FGSC 9923 / NRRL Y-1056) (Yeast).